A 392-amino-acid chain; its full sequence is F-box only protein 5-A (392 aa).

The interval 1–21 (MMCGFASNQSPKKLSSKKSSA) is disordered. The segment covering 7 to 20 (SNQSPKKLSSKKSS) has biased composition (low complexity). An F-box domain is found at 197–244 (AELFHRDFKHLLTKILRHLSAMDLINVISVSTTWRKLLQKDNWAYNAY). Residues 319–367 (SLKVCVDCGSPAKHDPCLHRAICTRESCKLDFCTRCSCKYHFSKSCLMS) form a ZBR-type zinc finger. Positions 323, 326, 341, 346, 351, 354, 359, and 364 each coordinate Zn(2+).

As to quaternary structure, part of a SCF (SKP1-cullin-F-box) protein ligase complex. Interacts with btrc. Interacts with skp1. Interacts with cdc20. Interacts with pin1; stabilizes fbxo5 by preventing its association with btrc in an isomerization-dependent pathway; this interaction is present during G2 phase and prevents fbxo5 degradation. Interacts with plk1. In terms of processing, proteolysed; proteolysis is induced by both cyclin B-cdk1 and cyclin A-cdk1/2 complex through probable phosphorylation. Proteolysis is inhibited by pin1 during G2.

The protein localises to the nucleus. It localises to the cytoplasm. Its subcellular location is the cytoskeleton. The protein resides in the spindle. It is found in the microtubule organizing center. The protein localises to the centrosome. It participates in protein modification; protein ubiquitination. Its function is as follows. Regulates progression through early mitosis by inhibiting the anaphase promoting complex/cyclosome (APC). Binds to the APC activator cdc20 to prevent APC activation. Can also bind directly to the APC to inhibit substrate-binding. Required to arrest unfertilized eggs at metaphase of meiosis II, by preventing their release from metaphase of meiosis II, through inhibition of APC-dependent cyclin B destruction leading to stabilization of cyclin B-cdk1 complex activity. This Xenopus laevis (African clawed frog) protein is F-box only protein 5-A (fbxo5-a).